A 346-amino-acid polypeptide reads, in one-letter code: N-acetyl-gamma-glutamyl-phosphate reductase (346 aa).

Cys-149 is an active-site residue.

This sequence belongs to the NAGSA dehydrogenase family. Type 1 subfamily.

The protein localises to the cytoplasm. The catalysed reaction is N-acetyl-L-glutamate 5-semialdehyde + phosphate + NADP(+) = N-acetyl-L-glutamyl 5-phosphate + NADPH + H(+). The protein operates within amino-acid biosynthesis; L-arginine biosynthesis; N(2)-acetyl-L-ornithine from L-glutamate: step 3/4. Catalyzes the NADPH-dependent reduction of N-acetyl-5-glutamyl phosphate to yield N-acetyl-L-glutamate 5-semialdehyde. The polypeptide is N-acetyl-gamma-glutamyl-phosphate reductase (Saccharophagus degradans (strain 2-40 / ATCC 43961 / DSM 17024)).